The chain runs to 30 residues: Thermophilic aminopeptidase 1 alpha chain (30 aa).

Belongs to the peptidase M42 family. In terms of assembly, 12 chains of two different but homologous types, alpha and beta, which can combine in various ratios. It depends on a divalent metal cation as a cofactor.

Metalloenzyme of broad specificity, releasing all N-terminal amino acids. The protein is Thermophilic aminopeptidase 1 alpha chain of Geobacillus stearothermophilus (Bacillus stearothermophilus).